Here is a 629-residue protein sequence, read N- to C-terminus: tRNA uridine 5-carboxymethylaminomethyl modification enzyme MnmG (629 aa).

FAD is bound by residues 14–19 (GAGHAG), Val126, and Ser181. 273 to 287 (GPRYCPSIEDKVVRF) is an NAD(+) binding site. Gln370 is a binding site for FAD.

It belongs to the MnmG family. As to quaternary structure, homodimer. Heterotetramer of two MnmE and two MnmG subunits. FAD is required as a cofactor.

Its subcellular location is the cytoplasm. In terms of biological role, NAD-binding protein involved in the addition of a carboxymethylaminomethyl (cmnm) group at the wobble position (U34) of certain tRNAs, forming tRNA-cmnm(5)s(2)U34. The polypeptide is tRNA uridine 5-carboxymethylaminomethyl modification enzyme MnmG (Bacillus cereus (strain ATCC 14579 / DSM 31 / CCUG 7414 / JCM 2152 / NBRC 15305 / NCIMB 9373 / NCTC 2599 / NRRL B-3711)).